A 362-amino-acid polypeptide reads, in one-letter code: Histidinol-phosphate aminotransferase (362 aa).

An N6-(pyridoxal phosphate)lysine modification is found at K222.

Belongs to the class-II pyridoxal-phosphate-dependent aminotransferase family. Histidinol-phosphate aminotransferase subfamily. Homodimer. It depends on pyridoxal 5'-phosphate as a cofactor.

The catalysed reaction is L-histidinol phosphate + 2-oxoglutarate = 3-(imidazol-4-yl)-2-oxopropyl phosphate + L-glutamate. It functions in the pathway amino-acid biosynthesis; L-histidine biosynthesis; L-histidine from 5-phospho-alpha-D-ribose 1-diphosphate: step 7/9. The sequence is that of Histidinol-phosphate aminotransferase from Shewanella amazonensis (strain ATCC BAA-1098 / SB2B).